Reading from the N-terminus, the 268-residue chain is Nickel import ATP-binding protein NikE (268 aa).

Positions 4–252 constitute an ABC transporter domain; it reads LNVSDLSHHY…SSDAGRVLQN (249 aa). 45 to 52 lines the ATP pocket; it reads GRSGCGKS.

It belongs to the ABC transporter superfamily. Nickel importer (TC 3.A.1.5.3) family. In terms of assembly, the complex is composed of two ATP-binding proteins (NikD and NikE), two transmembrane proteins (NikB and NikC) and a solute-binding protein (NikA).

Its subcellular location is the cell inner membrane. It catalyses the reaction Ni(2+)(out) + ATP + H2O = Ni(2+)(in) + ADP + phosphate + H(+). Part of the ABC transporter complex NikABCDE involved in nickel import. Responsible for energy coupling to the transport system. The protein is Nickel import ATP-binding protein NikE of Escherichia coli O157:H7.